A 215-amino-acid polypeptide reads, in one-letter code: MRDELVWIDCEMTGLDLRSDLLIEIAVLVTDADLNILGDGLDVVIHAPDEALDAMIPVVTEMHTRSGLIEEVRASTVDLATAEEMVLDYIRGHVKQAKTAPLAGNSIATDRGFIARDMAKLDDYLHYRMIDVSSIKELCRRWYPRIYFGQPEKGLAHRALADIHESIRELKYYRQTAFVAPPGPSTSDIAAIAAELGPPGKDAADTDSAAGHTTG.

An Exonuclease domain is found at 5-170 (LVWIDCEMTG…ADIHESIREL (166 aa)). Y127 is an active-site residue. The segment at 196 to 215 (LGPPGKDAADTDSAAGHTTG) is disordered.

This sequence belongs to the oligoribonuclease family.

It is found in the cytoplasm. Its function is as follows. 3'-to-5' exoribonuclease specific for small oligoribonucleotides. The polypeptide is Oligoribonuclease (Mycobacterium sp. (strain JLS)).